The chain runs to 349 residues: Homoserine O-succinyltransferase (349 aa).

Cysteine 146 functions as the Acyl-thioester intermediate in the catalytic mechanism. Substrate is bound by residues lysine 167 and serine 196. Histidine 239 (proton acceptor) is an active-site residue. Residue glutamate 241 is part of the active site. Position 253 (arginine 253) interacts with substrate.

Belongs to the MetA family.

The protein resides in the cytoplasm. The enzyme catalyses L-homoserine + succinyl-CoA = O-succinyl-L-homoserine + CoA. Its pathway is amino-acid biosynthesis; L-methionine biosynthesis via de novo pathway; O-succinyl-L-homoserine from L-homoserine: step 1/1. Transfers a succinyl group from succinyl-CoA to L-homoserine, forming succinyl-L-homoserine. In vitro, can also use glutaryl-CoA as acyl donor. The chain is Homoserine O-succinyltransferase from Thiobacillus denitrificans (strain ATCC 25259 / T1).